The sequence spans 269 residues: Proenkephalin-A (269 aa).

Residues 1–24 form the signal peptide; that stretch reads MAQFLRLCIWLLALGSCLLATVQA. Cystine bridges form between C26–C48, C30–C52, and C33–C65. The interval 165–191 is disordered; sequence DNRAKDSHQQESTNNDEDSTSKRYGGF. 2 consecutive propeptides follow at residues 198 to 209 and 219 to 229; these read SPQLEDEAKELQ and VGRPEWWMDYQ. At S253 the chain carries Phosphoserine.

The protein belongs to the opioid neuropeptide precursor family. Post-translationally, proenkephalin-A is cleaved by CTSL to generate Met-enkephalin. Processed and degraded by ACE. In terms of processing, probably cleaved by ACE. Post-translationally, processed by ACE to generate Met-enkephalin in the nucleus accumbens of the brain. The N-terminal domain contains 6 conserved cysteines thought to be involved in disulfide bonding and/or processing. As to expression, expressed in brain, heart and testis.

It is found in the secreted. The protein localises to the cytoplasmic vesicle. It localises to the secretory vesicle. Its subcellular location is the chromaffin granule lumen. Neuropeptide that competes with and mimic the effects of opiate drugs. They play a role in a number of physiologic functions, including pain perception and responses to stress. Its function is as follows. Met-enkephalin-Arg-Phe neuropeptide acts as a strong ligand of Mu-type opioid receptor OPRM1. Met-enkephalin-Arg-Phe-binding to OPRM1 in the nucleus accumbens of the brain increases activation of OPRM1, leading to long-term synaptic depression of glutamate release. Functionally, increases glutamate release in the striatum and decreases GABA concentration in the striatum. In terms of biological role, increases glutamate release in the striatum. In Rattus norvegicus (Rat), this protein is Proenkephalin-A (Penk).